A 563-amino-acid chain; its full sequence is BOS complex subunit NCLN (563 aa).

The first 42 residues, 1–42 (MLEEAGEVLENVLKASCLPLGFIVFLPAVLLLVAPPLPAADA), serve as a signal peptide directing secretion. Residues 43–522 (AHEFTVYRMQ…VMNAYRVKPA (480 aa)) are Lumenal-facing. Asparagine 241 and asparagine 428 each carry an N-linked (GlcNAc...) asparagine glycan. A helical transmembrane segment spans residues 523-543 (IFDLLLALCIGAYLGMAYTAV). Topologically, residues 544 to 563 (QHFHVLYKTVQRLLLKAKAQ) are cytoplasmic.

This sequence belongs to the nicastrin family. Component of the back of Sec61 (BOS) complex, composed of NCLN/Nicalin, NOMO1 and TMEM147. The BOS complex is part of the multi-pass translocon (MPT) complex, composed of three subcomplexes, the GEL complex (composed of RAB5IF/OPTI and TMCO1), the BOS complex (composed of NCLN/Nicalin, NOMO1 and TMEM147) and the PAT complex (composed of WDR83OS/Asterix and CCDC47). The MPT complex associates with the SEC61 complex.

The protein localises to the endoplasmic reticulum membrane. In terms of biological role, component of the multi-pass translocon (MPT) complex that mediates insertion of multi-pass membrane proteins into the lipid bilayer of membranes. The MPT complex takes over after the SEC61 complex: following membrane insertion of the first few transmembrane segments of proteins by the SEC61 complex, the MPT complex occludes the lateral gate of the SEC61 complex to promote insertion of subsequent transmembrane regions. May antagonize Nodal signaling and subsequent organization of axial structures during mesodermal patterning, via its interaction with NOMO. This is BOS complex subunit NCLN (Ncln) from Rattus norvegicus (Rat).